The following is a 522-amino-acid chain: Zinc finger protein 892 (522 aa).

Disordered regions lie at residues M1–K22 and A96–P124. Basic and acidic residues predominate over residues K100 to D116. C2H2-type zinc fingers lie at residues W221–H243, Y249–H271, Y277–H299, Y305–H327, Y333–H355, Y361–H383, Y389–H411, Y417–H439, Y445–H467, and Y473–H495.

It belongs to the krueppel C2H2-type zinc-finger protein family.

The protein localises to the nucleus. In terms of biological role, may be involved in transcriptional regulation. The sequence is that of Zinc finger protein 892 from Homo sapiens (Human).